We begin with the raw amino-acid sequence, 121 residues long: Large ribosomal subunit protein bL12 (121 aa).

The protein belongs to the bacterial ribosomal protein bL12 family. As to quaternary structure, homodimer. Part of the ribosomal stalk of the 50S ribosomal subunit. Forms a multimeric L10(L12)X complex, where L10 forms an elongated spine to which 2 to 4 L12 dimers bind in a sequential fashion. Binds GTP-bound translation factors.

Functionally, forms part of the ribosomal stalk which helps the ribosome interact with GTP-bound translation factors. Is thus essential for accurate translation. The polypeptide is Large ribosomal subunit protein bL12 (Limosilactobacillus fermentum (strain NBRC 3956 / LMG 18251) (Lactobacillus fermentum)).